The primary structure comprises 233 residues: Mediator of RNA polymerase II transcription subunit 7 (233 aa).

Residue K185 forms a Glycyl lysine isopeptide (Lys-Gly) (interchain with G-Cter in SUMO1); alternate linkage. K185 is covalently cross-linked (Glycyl lysine isopeptide (Lys-Gly) (interchain with G-Cter in SUMO2); alternate). Residues 188–213 (PMDADDSNNCTGQSDQQRENSGHRRD) form a disordered region. Phosphoserine is present on S194. The segment covering 203-213 (QQRENSGHRRD) has biased composition (basic and acidic residues).

Belongs to the Mediator complex subunit 7 family. Component of the Mediator complex, which is composed of MED1, MED4, MED6, MED7, MED8, MED9, MED10, MED11, MED12, MED13, MED13L, MED14, MED15, MED16, MED17, MED18, MED19, MED20, MED21, MED22, MED23, MED24, MED25, MED26, MED27, MED29, MED30, MED31, CCNC, CDK8 and CDC2L6/CDK11. The MED12, MED13, CCNC and CDK8 subunits form a distinct module termed the CDK8 module. Mediator containing the CDK8 module is less active than Mediator lacking this module in supporting transcriptional activation. Individual preparations of the Mediator complex lacking one or more distinct subunits have been variously termed ARC, CRSP, DRIP, PC2, SMCC and TRAP.

Its subcellular location is the nucleus. Functionally, component of the Mediator complex, a coactivator involved in the regulated transcription of nearly all RNA polymerase II-dependent genes. Mediator functions as a bridge to convey information from gene-specific regulatory proteins to the basal RNA polymerase II transcription machinery. Mediator is recruited to promoters by direct interactions with regulatory proteins and serves as a scaffold for the assembly of a functional preinitiation complex with RNA polymerase II and the general transcription factors. The polypeptide is Mediator of RNA polymerase II transcription subunit 7 (MED7) (Sus scrofa (Pig)).